Here is a 737-residue protein sequence, read N- to C-terminus: 1,4-alpha-glucan branching enzyme GlgB (737 aa).

D419 (nucleophile) is an active-site residue. The active-site Proton donor is E472.

Belongs to the glycosyl hydrolase 13 family. GlgB subfamily. Monomer.

The catalysed reaction is Transfers a segment of a (1-&gt;4)-alpha-D-glucan chain to a primary hydroxy group in a similar glucan chain.. It participates in glycan biosynthesis; glycogen biosynthesis. Its function is as follows. Catalyzes the formation of the alpha-1,6-glucosidic linkages in glycogen by scission of a 1,4-alpha-linked oligosaccharide from growing alpha-1,4-glucan chains and the subsequent attachment of the oligosaccharide to the alpha-1,6 position. The polypeptide is 1,4-alpha-glucan branching enzyme GlgB (Mesorhizobium japonicum (strain LMG 29417 / CECT 9101 / MAFF 303099) (Mesorhizobium loti (strain MAFF 303099))).